The sequence spans 104 residues: MPTLTKAELAEMLFEQVGLNKRESKDMVEAFFDVIREALEQGDSVKLSGFGNFQLRDKPQRPGRNPKTGEIIPITARRVVTFHASQKLKALVEERVEPMPASAA.

Residues 51–70 (GNFQLRDKPQRPGRNPKTGE) are disordered.

It belongs to the bacterial histone-like protein family. As to quaternary structure, heterodimer of an alpha and a beta chain.

Its function is as follows. This protein is one of the two subunits of integration host factor, a specific DNA-binding protein that functions in genetic recombination as well as in transcriptional and translational control. This is Integration host factor subunit alpha from Ralstonia nicotianae (strain ATCC BAA-1114 / GMI1000) (Ralstonia solanacearum).